Consider the following 149-residue polypeptide: Large-conductance mechanosensitive channel (149 aa).

Helical transmembrane passes span 14–34 and 85–105; these read VVDMAVGIIVGGAFGKLVNTL and GLFINAMISFIIMAFAVYLLV.

It belongs to the MscL family. Homopentamer.

Its subcellular location is the cell inner membrane. Functionally, channel that opens in response to stretch forces in the membrane lipid bilayer. May participate in the regulation of osmotic pressure changes within the cell. In Chlorobium phaeovibrioides (strain DSM 265 / 1930) (Prosthecochloris vibrioformis (strain DSM 265)), this protein is Large-conductance mechanosensitive channel.